A 432-amino-acid chain; its full sequence is Leucine-rich repeat-containing protein ODA7 (432 aa).

LRR repeat units follow at residues 47 to 68 (NLKA…PPLA), 69 to 90 (DLKC…EAVP), 91 to 112 (GLDT…ACCP), 113 to 134 (ALRT…AHLA), and 138 to 159 (ALQT…DILK). The LRRCT domain occupies 173-211 (PVVSNIKNYRKVLVTSIPSLTYLDDRPVFDNERKIAQAW). The stretch at 212–243 (LEGGLEGERAMRNQLKEEEEERSRKNHEFMMQ) forms a coiled coil. Disordered regions lie at residues 297–332 (RPGE…AAAE) and 368–432 (EELD…NDLD). Low complexity-rich tracts occupy residues 323 to 332 (GAWGSGAAAE) and 407 to 425 (VAAA…ISAA).

This sequence belongs to the DNAAF1 family. In terms of assembly, interacts with both outer row and I1 inner row dyneins.

Its subcellular location is the cytoplasm. It is found in the cytoskeleton. The protein localises to the cilium axoneme. In terms of biological role, cilium-specific protein required for cilia structures. Axonemal dynein-associated protein that participates in a structural link between inner and outer row dyneins. This chain is Leucine-rich repeat-containing protein ODA7 (ODA7), found in Chlamydomonas reinhardtii (Chlamydomonas smithii).